A 373-amino-acid polypeptide reads, in one-letter code: Peroxisomal biogenesis factor 3 (373 aa).

Residues 1 to 15 (MLRSVWNFLKRHKKK) lie on the Cytoplasmic side of the membrane. The segment at 1-45 (MLRSVWNFLKRHKKKCIFLGTVLGGVYILGKYGQKKIREIQEREA) is targeting to peroxisomes. The chain crosses the membrane as a helical span at residues 16–36 (CIFLGTVLGGVYILGKYGQKK). Topologically, residues 37 to 116 (IREIQEREAA…LKIISFTRST (80 aa)) are peroxisomal. Residues 117–140 (VAVYSTCMLVVLLRVQLNIIGGYI) form a helical membrane-spanning segment. The interval 120–136 (YSTCMLVVLLRVQLNII) is interaction with PEX19. Over 141–373 (YLDNAAVGKN…AFSTPQQLEK (233 aa)) the chain is Cytoplasmic.

This sequence belongs to the peroxin-3 family. Interacts with PEX19. In terms of tissue distribution, found in all examined tissues.

It localises to the peroxisome membrane. Functionally, involved in peroxisome biosynthesis and integrity. Assembles membrane vesicles before the matrix proteins are translocated. As a docking factor for PEX19, is necessary for the import of peroxisomal membrane proteins in the peroxisomes. In Homo sapiens (Human), this protein is Peroxisomal biogenesis factor 3 (PEX3).